The primary structure comprises 400 residues: Melanization protease 1 (400 aa).

The signal sequence occupies residues 1–22 (MEPHFFFTVLWMLLMGTSSTYA). Residues 23–137 (QEIFGYCRTP…PNCGENFGDR (115 aa)) constitute a propeptide, activation peptide. Residues 28 to 91 (YCRTPDENSG…FCFTNVQICC (64 aa)) form the Clip domain. Cystine bridges form between C29-C90, C39-C70, and C45-C91. Residues 98–120 (NQQPQWGNHPQPTQTTKPTKRSG) form a disordered region. Disulfide bonds link C130–C268, C168–C184, and C210–C220. Residues 138-399 (VVGGNETTKR…YLNWIENNVR (262 aa)) form the Peptidase S1 domain. The N-linked (GlcNAc...) asparagine glycan is linked to N142. H183 (charge relay system) is an active-site residue. Ca(2+) is bound by residues E201, D203, T206, and D209. The active-site Charge relay system is the D248. N296 carries an N-linked (GlcNAc...) asparagine glycan. 2 disulfide bridges follow: C315-C332 and C342-C375. S346 (charge relay system) is an active-site residue.

Belongs to the peptidase S1 family. CLIP subfamily.

In terms of biological role, serine protease which plays an essential role in the melanization immune response by acting downstream of sp7 to activate prophenoloxidase (PPO1). May function in diverse Hayan-dependent PPO1-activating cascades that are negatively controlled by different serpin proteins; Spn27A in the hemolymph and Spn77BA in the trachea. Regulation of melanization and PPO1 activation appears to be largely independent of the Toll signaling pathway. This is Melanization protease 1 from Drosophila melanogaster (Fruit fly).